Here is a 580-residue protein sequence, read N- to C-terminus: Mitogen-activated protein kinase 12 (580 aa).

The tract at residues 18–38 (RTASGSNQSSNAGEEAASSDL) is disordered. Over residues 20–29 (ASGSNQSSNA) the composition is skewed to polar residues. In terms of domain architecture, Protein kinase spans 87–378 (YQIQEVIGKG…AEEALADPYF (292 aa)). Residues 93–101 (IGKGSYGVV) and Lys116 each bind ATP. Asp213 (proton acceptor) is an active-site residue. Thr249 carries the post-translational modification Phosphothreonine. The TXY signature appears at 249–251 (TDY). The residue at position 251 (Tyr251) is a Phosphotyrosine. The interval 325 to 506 (ARRYLSTMRK…SADSVARTTV (182 aa)) is required for kinase activity and nuclear localization. Positions 458 to 580 (YSKGERGSPL…LSEQVSRMHS (123 aa)) are disordered. The span at 502–543 (ARTTVSPPMSQDAQQHGSAGQNGVTSTDLSSRSYLKSASISA) shows a compositional bias: polar residues. Residues 554–566 (EPEDDYISEEMEG) show a composition bias toward acidic residues.

It belongs to the protein kinase superfamily. CMGC Ser/Thr protein kinase family. MAP kinase subfamily. Interacts with EREBP1. In terms of processing, dually phosphorylated on Thr-249 and Tyr-251, which activates the enzyme. Phosphorylated on tyrosine residue.

It localises to the cytoplasm. It is found in the nucleus. It catalyses the reaction L-seryl-[protein] + ATP = O-phospho-L-seryl-[protein] + ADP + H(+). It carries out the reaction L-threonyl-[protein] + ATP = O-phospho-L-threonyl-[protein] + ADP + H(+). With respect to regulation, activated by threonine and tyrosine phosphorylation. Activated in response to hydrogen peroxide, salicylic acid, jasmonic acid, ethylene, fungal elicitor and infection with rice blast fungus (M.grisea). Its function is as follows. May be involved in defense signaling pathway. Phosphorylates EREBP1 transcriptional activator in vitro. Enhances DNA-binding activity of EREBP1 to the GCC box element of pathogenesis-related (PR) gene promoters. The sequence is that of Mitogen-activated protein kinase 12 (MPK12) from Oryza sativa subsp. japonica (Rice).